Reading from the N-terminus, the 331-residue chain is Bifunctional nuclease 1 (331 aa).

The BFN domain occupies 126-261; the sequence is CVQNNPRVLR…RIAYNNGLKV (136 aa). One can recognise a UVR domain in the interval 291 to 326; it reads EAQEFDLVRNMLVAAVEERYKDAAQYRDQLFMFRAK.

The protein belongs to the bifunctional nuclease family.

It is found in the nucleus. Its function is as follows. Bifunctional nuclease with both RNase and DNase activities. Involved in basal defense response. Participates in abscisic acid-derived callose deposition following infection by a necrotrophic pathogen. This is Bifunctional nuclease 1 (BBD1) from Oryza sativa subsp. indica (Rice).